The sequence spans 667 residues: Small ribosomal subunit protein mS39 (667 aa).

The transit peptide at 1–11 (MASSCSQALRH) directs the protein to the mitochondrion. Residues 199-226 (EAEQRSEEMEDIQDETQTKKGRSPKASD) form a disordered region. 6 PPR repeats span residues 249–283 (NTRSYSALIRGMVKHAAYTQAFSTYTDLLNNRLKA), 284–323 (DVHIFNALLAAVPAVRPKYNEKWELILDLLKQMAEQKVKP), 324–360 (NLLTLNAILKSLRRCGALGRSQAFPVISEMKVLSIEP), 361–400 (SLASYNHLLAIFYRSGAQVQTPTDVLVEVMNEVSGKSFTP), 482–516 (SSNAMSDLLRALDTDSRLDLIPKIWKDMKQLGHGN), and 565–599 (TASSLSDVTTILLAANRKQEAWEMLKLFRTHNRVP).

It belongs to the mitochondrion-specific ribosomal protein mS39 family.

Its subcellular location is the mitochondrion. Mitochondrial RNA-binding protein that may have a role in mitochondrial translation. In Danio rerio (Zebrafish), this protein is Small ribosomal subunit protein mS39 (ptcd3).